A 492-amino-acid chain; its full sequence is Probable Xaa-Pro aminopeptidase ACLA_020440 (492 aa).

Mn(2+) contacts are provided by Asp272, Asp283, Glu421, and Glu460.

Belongs to the peptidase M24B family. Mn(2+) serves as cofactor.

The enzyme catalyses Release of any N-terminal amino acid, including proline, that is linked to proline, even from a dipeptide or tripeptide.. Functionally, catalyzes the removal of a penultimate prolyl residue from the N-termini of peptides. The polypeptide is Probable Xaa-Pro aminopeptidase ACLA_020440 (Aspergillus clavatus (strain ATCC 1007 / CBS 513.65 / DSM 816 / NCTC 3887 / NRRL 1 / QM 1276 / 107)).